The primary structure comprises 262 residues: Transcription factor Adf-1 (262 aa).

The segment at residues Asn-24 to Arg-104 is a DNA-binding region (MADF). The BESS domain occupies Ser-217–Leu-256.

O-glycosylated; contains N-acetylglucosamine side chains.

It is found in the nucleus. Its function is as follows. May play an important role not only in the regulation of Adh expression but also in the transcription of other genes. The polypeptide is Transcription factor Adf-1 (Adf1) (Drosophila melanogaster (Fruit fly)).